The following is a 142-amino-acid chain: Thioredoxin-like protein YLS8 (142 aa).

This sequence belongs to the DIM1 family. Expressed in roots, leaves, stems, cauline leaves and flowers.

In Arabidopsis thaliana (Mouse-ear cress), this protein is Thioredoxin-like protein YLS8 (YLS8).